Here is a 177-residue protein sequence, read N- to C-terminus: Large ribosomal subunit protein uL6 (177 aa).

This sequence belongs to the universal ribosomal protein uL6 family. As to quaternary structure, part of the 50S ribosomal subunit.

This protein binds to the 23S rRNA, and is important in its secondary structure. It is located near the subunit interface in the base of the L7/L12 stalk, and near the tRNA binding site of the peptidyltransferase center. In Cupriavidus pinatubonensis (strain JMP 134 / LMG 1197) (Cupriavidus necator (strain JMP 134)), this protein is Large ribosomal subunit protein uL6.